Here is an 86-residue protein sequence, read N- to C-terminus: Defensin-like protein 259 (86 aa).

A signal peptide spans 1-25 (MKNASLKLPLLIFILVITSNLGAEA). Intrachain disulfides connect cysteine 60–cysteine 76, cysteine 66–cysteine 83, and cysteine 70–cysteine 85.

Belongs to the DEFL family.

It is found in the secreted. The sequence is that of Defensin-like protein 259 from Arabidopsis thaliana (Mouse-ear cress).